The chain runs to 91 residues: Mercuric transport protein periplasmic component (91 aa).

The signal sequence occupies residues 1–19 (MKKLFASLALAAAVAPVWA). One can recognise an HMA domain in the interval 22–88 (QTVTLAVPGM…ATADAGYPSS (67 aa)). Positions 33 and 36 each coordinate Hg(2+).

The protein belongs to the MerP family. In terms of assembly, monomer.

It is found in the periplasm. Involved in mercury resistance. Acts as a mercury scavenger that specifically binds to a mercuric ion in the periplasm and probably passes it to the cytoplasmic mercuric reductase MerA via the mercuric transport protein MerT. In Shigella flexneri, this protein is Mercuric transport protein periplasmic component.